A 313-amino-acid chain; its full sequence is tRNA uridine(34) hydroxylase (313 aa).

The 99-residue stretch at 127–225 folds into the Rhodanese domain; that stretch reads SDPDTILIDT…YLETVPEEES (99 aa). Catalysis depends on Cys-185, which acts as the Cysteine persulfide intermediate.

The protein belongs to the TrhO family.

It carries out the reaction uridine(34) in tRNA + AH2 + O2 = 5-hydroxyuridine(34) in tRNA + A + H2O. Catalyzes oxygen-dependent 5-hydroxyuridine (ho5U) modification at position 34 in tRNAs. In Gluconobacter oxydans (strain 621H) (Gluconobacter suboxydans), this protein is tRNA uridine(34) hydroxylase.